Here is a 37-residue protein sequence, read N- to C-terminus: Dolichyl-diphosphooligosaccharide--protein glycosyltransferase subunit 4B (37 aa).

Over 1 to 8 (MFDDQDLG) the chain is Lumenal. A helical transmembrane segment spans residues 9–29 (FFANFLGIFIFVLVMAYHFVM). At 30 to 37 (ADVKYEGN) the chain is on the cytoplasmic side.

It belongs to the OST4 family. Component of the oligosaccharyltransferase (OST) complex.

The protein resides in the endoplasmic reticulum membrane. Subunit of the oligosaccharyl transferase (OST) complex that catalyzes the initial transfer of a defined glycan (Glc(3)Man(9)GlcNAc(2) in eukaryotes) from the lipid carrier dolichol-pyrophosphate to an asparagine residue within an Asn-X-Ser/Thr consensus motif in nascent polypeptide chains, the first step in protein N-glycosylation. N-glycosylation occurs cotranslationally and the complex associates with the Sec61 complex at the channel-forming translocon complex that mediates protein translocation across the endoplasmic reticulum (ER). All subunits are required for a maximal enzyme activity. This Oryza sativa subsp. japonica (Rice) protein is Dolichyl-diphosphooligosaccharide--protein glycosyltransferase subunit 4B (OST4B).